The chain runs to 60 residues: Small ribosomal subunit protein eS31 (60 aa).

Residues Cys27, Cys30, Cys45, and Cys48 each coordinate Zn(2+). The C4-type zinc finger occupies 27-48 (CPRCGPGVFMAEHLNRYACGKC).

It belongs to the eukaryotic ribosomal protein eS31 family. As to quaternary structure, part of the 30S ribosomal subunit. It depends on Zn(2+) as a cofactor.

The chain is Small ribosomal subunit protein eS31 from Methanocaldococcus jannaschii (strain ATCC 43067 / DSM 2661 / JAL-1 / JCM 10045 / NBRC 100440) (Methanococcus jannaschii).